Consider the following 396-residue polypeptide: S-adenosylmethionine synthase 2 (396 aa).

Position 13 (Glu-13) interacts with Mg(2+). His-19 contacts ATP. Position 47 (Glu-47) interacts with K(+). L-methionine is bound by residues Glu-60 and Gln-103. ATP is bound by residues 171-173, 239-242, Asp-250, 256-257, Ala-273, Lys-277, and Lys-281; these read DGK, SGRF, and RK. Asp-250 is a binding site for L-methionine. Lys-281 provides a ligand contact to L-methionine.

This sequence belongs to the AdoMet synthase family. Homotetramer. It depends on Mn(2+) as a cofactor. Mg(2+) serves as cofactor. The cofactor is Co(2+). Requires K(+) as cofactor. Expressed in roots, stems and leaves (at protein level).

It is found in the cytoplasm. It carries out the reaction L-methionine + ATP + H2O = S-adenosyl-L-methionine + phosphate + diphosphate. It functions in the pathway amino-acid biosynthesis; S-adenosyl-L-methionine biosynthesis; S-adenosyl-L-methionine from L-methionine: step 1/1. Its function is as follows. Catalyzes the formation of S-adenosylmethionine from methionine and ATP. The reaction comprises two steps that are both catalyzed by the same enzyme: formation of S-adenosylmethionine (AdoMet) and triphosphate, and subsequent hydrolysis of the triphosphate. May be involved in the synthesis of betain in response to abiotic stress such as high salinity. In Atriplex nummularia (Old man saltbush), this protein is S-adenosylmethionine synthase 2 (SAMS2).